Here is a 372-residue protein sequence, read N- to C-terminus: Peptide chain release factor 2 (372 aa).

Q253 is subject to N5-methylglutamine.

Belongs to the prokaryotic/mitochondrial release factor family. In terms of processing, methylated by PrmC. Methylation increases the termination efficiency of RF2.

The protein resides in the cytoplasm. Its function is as follows. Peptide chain release factor 2 directs the termination of translation in response to the peptide chain termination codons UGA and UAA. The protein is Peptide chain release factor 2 of Nocardia farcinica (strain IFM 10152).